Consider the following 411-residue polypeptide: uncharacterized protein (411 aa).

Belongs to the peptidase M20 family.

This is an uncharacterized protein from Haemophilus influenzae (strain ATCC 51907 / DSM 11121 / KW20 / Rd).